The sequence spans 897 residues: Translation initiation factor IF-2 (897 aa).

The tr-type G domain occupies 402–570 (NRAPIVTIMG…SILVQSEILE (169 aa)). The segment at 411–418 (GHVDHGKT) is G1. 411–418 (GHVDHGKT) is a binding site for GTP. Positions 436 to 440 (GITQN) are G2. A G3 region spans residues 458–461 (DTPG). Residues 458–462 (DTPGH) and 512–515 (NKID) contribute to the GTP site. Residues 512–515 (NKID) form a G4 region. A G5 region spans residues 548–550 (SAV).

It belongs to the TRAFAC class translation factor GTPase superfamily. Classic translation factor GTPase family. IF-2 subfamily.

It localises to the cytoplasm. In terms of biological role, one of the essential components for the initiation of protein synthesis. Protects formylmethionyl-tRNA from spontaneous hydrolysis and promotes its binding to the 30S ribosomal subunits. Also involved in the hydrolysis of GTP during the formation of the 70S ribosomal complex. The chain is Translation initiation factor IF-2 from Blochmanniella floridana.